Reading from the N-terminus, the 376-residue chain is tRNA pseudouridine synthase C (376 aa).

The active site involves D168.

This sequence in the C-terminal section; belongs to the pseudouridine synthase RluA family. To E.coli YqcC in the N-terminal section.

The enzyme catalyses uridine(65) in tRNA = pseudouridine(65) in tRNA. Its function is as follows. Responsible for synthesis of pseudouridine from uracil-65 in transfer RNAs. This is tRNA pseudouridine synthase C (truC) from Pectobacterium carotovorum subsp. carotovorum (Erwinia carotovora subsp. carotovora).